We begin with the raw amino-acid sequence, 324 residues long: Tetrachlorobenzoquinone reductase (324 aa).

One can recognise an FAD-binding FR-type domain in the interval Val-5–Val-107. The 87-residue stretch at Phe-238–Ile-324 folds into the 2Fe-2S ferredoxin-type domain. [2Fe-2S] cluster is bound by residues Cys-273, Cys-278, Cys-281, and Cys-311.

It belongs to the PDR/VanB family. Homotrimer. FMN is required as a cofactor. It depends on [2Fe-2S] cluster as a cofactor.

The enzyme catalyses 2,3,5,6-tetrachlorohydroquinone + NAD(+) + H(+) = 2,3,5,6-tetrachloro-1,4-benzoquinone + NADH. It functions in the pathway xenobiotic degradation; pentachlorophenol degradation. With respect to regulation, in vitro, activated by tetrachlorohydroquinone (TCHQ) at low concentrations and inhibited at high concentrations (above 200 uM). However, PcpD would only be stimulated by tetrachlorohydroquinone (TCHQ) under in vivo conditions due to the toxicity of tetrachlorohydroquinone (TCHQ). Competitively inhibited by pentachlorophenol (PCP) in a concentration-dependent manner. PcpD is regulated by tetrachlorohydroquinone (TCHQ) and pentachlorophenol (PCP) using a mechanism, which maintains tetrachlorobenzoquinone at a level that would neither significantly decrease the biodegradation of pentachlorophenol (PCP) nor cause cytotoxicity in cells. Involved in the degradation of the xenobiocide pentachlorophenol (PCP). Catalyzes the reduction of tetrachlorobenzoquinone (TCBQ) to yield tetrachlorohydroquinone (TCHQ). Also able to reduce 2,6-dichloroindophenol (DCIP). In Sphingobium chlorophenolicum, this protein is Tetrachlorobenzoquinone reductase.